The following is a 746-amino-acid chain: Quiannulatene synthase (746 aa).

The tract at residues 1-336 is sesterterpenoid synthase; that stretch reads MASEVIVISD…SRYPTKTELN (336 aa). Residue Asp95 participates in Mg(2+) binding. The interval 338–746 is geranylfarnesyl diphosphate synthase; that stretch reads PEVIIVDGEL…VELMLRRLWV (409 aa). Positions 465, 468, and 497 each coordinate isopentenyl diphosphate. Positions 504 and 508 each coordinate Mg(2+). Arg513 is a dimethylallyl diphosphate binding site. Arg514 serves as a coordination point for isopentenyl diphosphate. Residues Lys591, Thr592, Gln628, Asn635, and Lys645 each coordinate dimethylallyl diphosphate.

The protein in the N-terminal section; belongs to the terpene synthase family. It in the C-terminal section; belongs to the FPP/GGPP synthase family. Mg(2+) is required as a cofactor.

The enzyme catalyses isopentenyl diphosphate + (2E,6E)-farnesyl diphosphate = (2E,6E,10E)-geranylgeranyl diphosphate + diphosphate. The catalysed reaction is (2E,6E,10E,14E)-geranylfarnesyl diphosphate = quiannulatene + diphosphate. It functions in the pathway secondary metabolite biosynthesis; terpenoid biosynthesis. Functionally, bifunctional sesterterpene synthase; part of the gene cluster that mediates the biosynthesis of the pentacyclic sesterterpene quiannulatic acid. The first step of the pathway is performed by the sesterterpene synthase (QS) that possesses both prenyl transferase and terpene cyclase activity, converting isopentenyl diphosphate and dimethylallyl diphosphate into geranylfarnesyl diphosphate (GFPP) and further converting GFPP into quiannulatene via an unprecedented cyclization mode which involves three rounds of hydride shifts and two successive C-C bond migrations to construct the 5-6-5-5-5 fused ring. The cytochrome P450 monooxygenase Qnn-P450 then oxidizes quiannulatene at C-19 in 3 successive reactions to afford quiannulatic acid. This Emericella variicolor (Aspergillus stellatus) protein is Quiannulatene synthase.